We begin with the raw amino-acid sequence, 228 residues long: Lipoprotein-releasing system ATP-binding protein LolD (228 aa).

Residues 6–228 (LRLSGIEKTY…LSDGRLSAES (223 aa)) enclose the ABC transporter domain. 43–50 (APSGAGKS) serves as a coordination point for ATP.

It belongs to the ABC transporter superfamily. Lipoprotein translocase (TC 3.A.1.125) family. The complex is composed of two ATP-binding proteins (LolD) and two transmembrane proteins (LolC and LolE).

The protein resides in the cell inner membrane. Part of the ABC transporter complex LolCDE involved in the translocation of mature outer membrane-directed lipoproteins, from the inner membrane to the periplasmic chaperone, LolA. Responsible for the formation of the LolA-lipoprotein complex in an ATP-dependent manner. This chain is Lipoprotein-releasing system ATP-binding protein LolD, found in Ruegeria pomeroyi (strain ATCC 700808 / DSM 15171 / DSS-3) (Silicibacter pomeroyi).